Here is a 106-residue protein sequence, read N- to C-terminus: Large ribosomal subunit protein uL24 (106 aa).

It belongs to the universal ribosomal protein uL24 family. Part of the 50S ribosomal subunit.

Its function is as follows. One of two assembly initiator proteins, it binds directly to the 5'-end of the 23S rRNA, where it nucleates assembly of the 50S subunit. One of the proteins that surrounds the polypeptide exit tunnel on the outside of the subunit. In Parabacteroides distasonis (strain ATCC 8503 / DSM 20701 / CIP 104284 / JCM 5825 / NCTC 11152), this protein is Large ribosomal subunit protein uL24.